Here is a 370-residue protein sequence, read N- to C-terminus: Mesoderm posterior protein 2 (370 aa).

Disordered stretches follow at residues 51-89 (PSQPAGPARSTRTTQATAPRRTRPAPAGGQRQSASEREK), 231-265 (SLERAADSSPWAPPQACPGMQMSPEPRNKTGHWTQ), and 325-350 (TSEDQGSSPALQLPVASPTPSSGLQL). Over residues 57 to 77 (PARSTRTTQATAPRRTRPAPA) the composition is skewed to low complexity. A bHLH domain is found at 79–133 (GQRQSASEREKLRMRTLARALQELRRFLPPSVAPAGQSLTKIETLRLAIRYIGHL). The span at 325–334 (TSEDQGSSPA) shows a compositional bias: polar residues. Residues 326–330 (SEDQG) are may contain a degradation domain.

In terms of processing, degraded by the proteasome. Post-translationally, phosphorylated.

The protein localises to the nucleus. Its function is as follows. Transcription factor with important role in somitogenesis. Defines the rostrocaudal patterning of the somite by participating in distinct Notch pathways. Also regulates the FGF signaling pathway. Specifies the rostral half of the somites. Generates rostro-caudal polarity of somites by down-regulating in the presumptive rostral domain DLL1, a Notch ligand. Participates in the segment border formation by activating in the anterior presomitic mesoderm LFNG, a negative regulator of DLL1-Notch signaling. Acts as a strong suppressor of Notch activity. Together with MESP1 is involved in the epithelialization of somitic mesoderm and in the development of cardiac mesoderm. May play a role with Tcf15 in the differentiation of myotomal and sclerotomal cells by regulating Pax family genes. Also controls the expression of the protocadherin PCDH8/PAPC, EPHA4, RIPPLY2, NOTCH2, FGFR1, and CER1. Binds to the E-boxes within the EPH4A and RIPPLY2 enhancers. This chain is Mesoderm posterior protein 2 (Mesp2), found in Mus musculus (Mouse).